Consider the following 616-residue polypeptide: Chaperone protein HscA (616 aa).

This sequence belongs to the heat shock protein 70 family.

Its function is as follows. Chaperone involved in the maturation of iron-sulfur cluster-containing proteins. Has a low intrinsic ATPase activity which is markedly stimulated by HscB. Involved in the maturation of IscU. This Escherichia coli O17:K52:H18 (strain UMN026 / ExPEC) protein is Chaperone protein HscA.